The primary structure comprises 117 residues: UPF0342 protein BcerKBAB4_0767 (117 aa).

It belongs to the UPF0342 family.

The chain is UPF0342 protein BcerKBAB4_0767 from Bacillus mycoides (strain KBAB4) (Bacillus weihenstephanensis).